A 624-amino-acid polypeptide reads, in one-letter code: Basal cell adhesion molecule (624 aa).

The N-terminal stretch at 1-25 is a signal peptide; that stretch reads MEPPDARAGLLWLTLLLSGYSGAQA. Ig-like V-type domains lie at 26–136 and 141–251; these read ELHV…SSVR and PEAT…HTFR. Residues 26 to 543 lie on the Extracellular side of the membrane; it reads ELHVSVPPRV…GSVAPQTAQA (518 aa). Disulfide bonds link C47/C119, C166/C231, and C285/C331. 3 Ig-like C2-type domains span residues 268–343, 357–436, and 443–534; these read PSTT…EEVQ, PLEL…QSFQ, and PELK…FHFG. N-linked (GlcNAc...) asparagine glycosylation is found at N315, N371, and N378. 2 cysteine pairs are disulfide-bonded: C379–C419 and C468–C518. The disordered stretch occupies residues 477 to 497; it reads KLTWSQRGDTTPAEPPFEGRG. The chain crosses the membrane as a helical span at residues 544 to 564; the sequence is GVAVMAVAVSVGLLLLVVAAF. Residues 565-624 are Cytoplasmic-facing; that stretch reads YCMRRKGRPGCCQRAEKGAPPAREPELSHSGSERPEHTGLLMGGPSGGGRGGNGGFGDEC. Residues 574–624 form a disordered region; that stretch reads GCCQRAEKGAPPAREPELSHSGSERPEHTGLLMGGPSGGGRGGNGGFGDEC. A compositionally biased stretch (basic and acidic residues) spans 587-601; the sequence is REPELSHSGSERPEH. Phosphoserine occurs at positions 592, 594, and 596. The segment covering 605 to 624 has biased composition (gly residues); that stretch reads LMGGPSGGGRGGNGGFGDEC.

Homodimer. Interacts with ITGA4:ITGB1. Interacts with spectrins SPTA1 and SPTB1.

It localises to the cell membrane. Its function is as follows. Transmembrane glycoprotein that functions as both a receptor and an adhesion molecule playing a crucial role in cell adhesion, motility, migration and invasion. Extracellular domain enables binding to extracellular matrix proteins, such as laminin, integrin and other ligands while its intracellular domain interacts with cytoskeletal proteins like hemoglobin, facilitating cell signal transduction. Serves as a receptor for laminin alpha-5/LAMA5 to promote cell adhesion. Mechanistically, JAK2 induces BCAM phosphorylation and activates its adhesion to laminin by stimulating a Rap1/AKT signaling pathway in the absence of EPOR. This chain is Basal cell adhesion molecule (Bcam), found in Rattus norvegicus (Rat).